The primary structure comprises 141 residues: Calcium-binding protein SPEC 2D (141 aa).

EF-hand domains lie at 10–42 (DQIK…MKSV), 43–72 (GHVL…AMIL), 73–107 (DKKC…FDRQ), and 108–141 (ITED…MNFC). Asp23, Asn25, Asp27, and Asn29 together coordinate Ca(2+). Residues Asp84, Asp86, Lys90, Asp95, Asp121, Asp125, Lys127, and Glu132 each coordinate Ca(2+).

As to expression, found in cell lineages giving rise to the aboral ectoderm, a squamous epithelium covering the surface of the late stage embryo and larva.

Functionally, calcium-binding protein involved in larval development and metamorphosis. Likely to function as calcium buffers mediating the transport of calcium from the sea water to the blastocoel where calcium is required for skeleton formation. In Strongylocentrotus purpuratus (Purple sea urchin), this protein is Calcium-binding protein SPEC 2D (SPEC2D).